We begin with the raw amino-acid sequence, 228 residues long: Protein LIAT1 (228 aa).

A disordered region spans residues 1 to 108 (MAGRGGTGAA…RAEPRDKEEN (108 aa)). The segment covering 12 to 24 (YGEEGEEEEEEEA) has biased composition (acidic residues). A lysine-rich domain region spans residues 49–71 (KRKVKKKKKKKKTKGSGKGDADK). Over residues 50–63 (RKVKKKKKKKKTKG) the composition is skewed to basic residues. The span at 90–108 (LNPHKDHGLRAEPRDKEEN) shows a compositional bias: basic and acidic residues. The tract at residues 113–165 (PYSYSINHPCFAEIEDTLSSQINESLRWDGILTDPEAEKERIRIYKLNRRKRY) is interaction with ATE1. Copy 1 of the repeat occupies 169–178 (ALKCFHSDPC).

In terms of assembly, self-associates (via Lys-rich domain); targets LIAT1 to the nucleolus. Interacts with ATE1; it is not a substrate of ATE1, the interaction takes place in the cytoplasm and seems to increase ATE1 arginyltransferase activity. Interacts with JMJD6 and MRPS14. Post-translationally, post-translationally modified by JMJD6 lysyl-hydroxylase activity at its Lys-rich domain, which inhibits its self-association and nucleolar localization. Highly expressed in spleen, thymus, liver and brown adipose tissue. Moderately expressed in liver, testis and lung.

Its subcellular location is the nucleus. It is found in the nucleolus. It localises to the cytoplasm. In terms of biological role, participates in nucleolar liquid-liquid phase separation (LLPS) through its N-terminal intrinsically disordered region (IDR). May be involved in ATE1-mediated N-terminal arginylation. The sequence is that of Protein LIAT1 from Mus musculus (Mouse).